Consider the following 190-residue polypeptide: Prostaglandin-H2 D-isomerase (190 aa).

Positions 1–22 (MATHHTLWMGLALLGVLGDLQA) are cleaved as a signal peptide. N-linked (GlcNAc...) asparagine glycosylation is present at asparagine 51. Catalysis depends on cysteine 65, which acts as the Nucleophile. The N-linked (GlcNAc...) asparagine glycan is linked to asparagine 78. A disulfide bridge links cysteine 89 with cysteine 186.

It belongs to the calycin superfamily. Lipocalin family. In terms of assembly, monomer.

The protein resides in the rough endoplasmic reticulum. It localises to the nucleus membrane. It is found in the golgi apparatus. The protein localises to the cytoplasm. Its subcellular location is the perinuclear region. The protein resides in the secreted. The catalysed reaction is prostaglandin H2 = prostaglandin D2. Catalyzes the conversion of PGH2 to PGD2, a prostaglandin involved in smooth muscle contraction/relaxation and a potent inhibitor of platelet aggregation. Involved in a variety of CNS functions, such as sedation, NREM sleep and PGE2-induced allodynia, and may have an anti-apoptotic role in oligodendrocytes. Binds small non-substrate lipophilic molecules, including biliverdin, bilirubin, retinal, retinoic acid and thyroid hormone, and may act as a scavenger for harmful hydrophobic molecules and as a secretory retinoid and thyroid hormone transporter. Possibly involved in development and maintenance of the blood-brain, blood-retina, blood-aqueous humor and blood-testis barrier. It is likely to play important roles in both maturation and maintenance of the central nervous system and male reproductive system. Involved in PLA2G3-dependent maturation of mast cells. PLA2G3 is secreted by immature mast cells and acts on nearby fibroblasts upstream to PTDGS to synthesize PGD2, which in turn promotes mast cell maturation and degranulation via PTGDR. The protein is Prostaglandin-H2 D-isomerase (PTGDS) of Gorilla gorilla gorilla (Western lowland gorilla).